The primary structure comprises 309 residues: Homoserine O-succinyltransferase (309 aa).

Cysteine 142 (acyl-thioester intermediate) is an active-site residue. Positions 163 and 192 each coordinate substrate. Histidine 235 serves as the catalytic Proton acceptor. Residue glutamate 237 is part of the active site. Residue arginine 249 coordinates substrate.

This sequence belongs to the MetA family.

Its subcellular location is the cytoplasm. It carries out the reaction L-homoserine + succinyl-CoA = O-succinyl-L-homoserine + CoA. The protein operates within amino-acid biosynthesis; L-methionine biosynthesis via de novo pathway; O-succinyl-L-homoserine from L-homoserine: step 1/1. Its function is as follows. Transfers a succinyl group from succinyl-CoA to L-homoserine, forming succinyl-L-homoserine. The protein is Homoserine O-succinyltransferase of Yersinia enterocolitica serotype O:8 / biotype 1B (strain NCTC 13174 / 8081).